Here is a 494-residue protein sequence, read N- to C-terminus: Glutamate decarboxylase 5 (494 aa).

Position 276 is an N6-(pyridoxal phosphate)lysine (Lys276).

It belongs to the group II decarboxylase family. In terms of assembly, homohexamer. Interacts with calmodulin. Pyridoxal 5'-phosphate is required as a cofactor. As to expression, expressed in flowers.

The enzyme catalyses L-glutamate + H(+) = 4-aminobutanoate + CO2. Catalyzes the production of GABA. The calmodulin-binding is calcium-dependent and it is proposed that this may, directly or indirectly, form a calcium regulated control of GABA biosynthesis. The sequence is that of Glutamate decarboxylase 5 (GAD5) from Arabidopsis thaliana (Mouse-ear cress).